The chain runs to 365 residues: DNA replication and repair protein RecF (365 aa).

Position 30-37 (glycine 30–threonine 37) interacts with ATP.

Belongs to the RecF family.

It localises to the cytoplasm. Its function is as follows. The RecF protein is involved in DNA metabolism; it is required for DNA replication and normal SOS inducibility. RecF binds preferentially to single-stranded, linear DNA. It also seems to bind ATP. This is DNA replication and repair protein RecF from Leptospira interrogans serogroup Icterohaemorrhagiae serovar Lai (strain 56601).